We begin with the raw amino-acid sequence, 103 residues long: Histone H4 type VIII (103 aa).

The segment covering M1–G14 has biased composition (gly residues). Positions M1–R20 are disordered. Residue S2 is modified to N-acetylserine. The residue at position 2 (S2) is a Phosphoserine. R4 bears the Asymmetric dimethylarginine; by PRMT1; alternate mark. At R4 the chain carries Citrulline; alternate. Position 4 is an omega-N-methylarginine; by PRMT1; alternate (R4). At R4 the chain carries Symmetric dimethylarginine; by PRMT5 and PRMT7; alternate. Residues K6, K9, K13, and K17 each carry the N6-(2-hydroxyisobutyryl)lysine; alternate modification. Position 6 is an N6-acetyl-N6-methyllysine; alternate (K6). 4 positions are modified to N6-acetyllysine: K6, K9, K13, and K17. Residues K6, K9, K13, and K17 each carry the N6-butyryllysine; alternate modification. Residue K6 is modified to N6-glutaryllysine; alternate. Residues K6, K9, K13, and K17 each carry the N6-lactoyllysine; alternate modification. The residue at position 9 (K9) is an N6-propionyllysine; alternate. K13 bears the N6-acetyl-N6-methyllysine; alternate mark. K13 carries the post-translational modification N6-glutaryllysine; alternate. K13 carries the N6-methyllysine; alternate modification. The residue at position 17 (K17) is an N6-propionyllysine; alternate. K21 carries the post-translational modification N6-methyllysine; alternate. An N6,N6,N6-trimethyllysine; alternate modification is found at K21. K21 bears the N6,N6-dimethyllysine; alternate mark. N6-(2-hydroxyisobutyryl)lysine; alternate is present on residues K32 and K45. K32 carries the post-translational modification N6-acetyllysine. 2 positions are modified to N6-butyryllysine; alternate: K32 and K45. Position 32 is an N6-glutaryllysine; alternate (K32). K32 bears the N6-lactoyllysine; alternate mark. N6-propionyllysine; alternate occurs at positions 32 and 45. An N6-succinyllysine; alternate modification is found at K32. K32 participates in a covalent cross-link: Glycyl lysine isopeptide (Lys-Gly) (interchain with G-Cter in UFM1); alternate. S48 carries the phosphoserine modification. Residue Y52 is modified to Phosphotyrosine. K60 is subject to N6-acetyllysine. N6-glutaryllysine; alternate occurs at positions 60, 78, and 80. K60 carries the N6-(2-hydroxyisobutyryl)lysine modification. K78 and K80 each carry N6-(2-hydroxyisobutyryl)lysine; alternate. N6-butyryllysine; alternate is present on residues K78 and K80. K78 is modified (N6-lactoyllysine; alternate). 2 positions are modified to N6-propionyllysine; alternate: K78 and K80. K78 is subject to N6-succinyllysine. Residue K80 is modified to N6-acetyllysine. Position 89 is a phosphotyrosine (Y89). K92 carries the post-translational modification N6-(2-hydroxyisobutyryl)lysine; alternate. Position 92 is an N6-butyryllysine; alternate (K92). At K92 the chain carries N6-glutaryllysine; alternate. K92 is subject to N6-lactoyllysine; alternate. N6-propionyllysine; alternate is present on K92. The residue at position 92 (K92) is an N6-succinyllysine; alternate. K92 carries the post-translational modification N6-acetyllysine; alternate. K92 participates in a covalent cross-link: Glycyl lysine isopeptide (Lys-Gly) (interchain with G-Cter in ubiquitin); alternate.

The protein belongs to the histone H4 family. As to quaternary structure, the nucleosome is a histone octamer containing two molecules each of H2A, H2B, H3 and H4 assembled in one H3-H4 heterotetramer and two H2A-H2B heterodimers. The octamer wraps approximately 147 bp of DNA. Post-translationally, acetylation at Lys-6 (H4K5ac), Lys-9 (H4K8ac), Lys-13 (H4K12ac) and Lys-17 (H4K16ac) occurs in coding regions of the genome but not in heterochromatin. In terms of processing, citrullination at Arg-4 (H4R3ci) by PADI4 impairs methylation. Monomethylation and asymmetric dimethylation at Arg-4 (H4R3me1 and H4R3me2a, respectively) by PRMT1 favors acetylation at Lys-9 (H4K8ac) and Lys-13 (H4K12ac). Demethylation is performed by JMJD6. Symmetric dimethylation on Arg-4 (H4R3me2s) by the PRDM1/PRMT5 complex may play a crucial role in the germ-cell lineage. Post-translationally, monomethylated, dimethylated or trimethylated at Lys-21 (H4K20me1, H4K20me2, H4K20me3). Monomethylation is performed by KMT5A/SET8. Trimethylation is performed by KMT5B and KMT5C and induces gene silencing. Monomethylated at Lys-13 (H4K12me1) by N6AMT1; H4K12me1 modification is present at the promoters of numerous genes encoding cell cycle regulators. In terms of processing, acetyl-methylated at Lys-6 and Lys-13 (H4K5acme and H4K12acme, respectively), acetyl-methylation is an epigenetic mark of active chromatin associated with increased transcriptional initiation. Acetyl-methylation is formed by acetylation by EP300/p300 of lysine residues that are already monomethylated on the same side chain. H4K5acme and H4K12acme marks specifically bind BRD2. Ubiquitinated by the CUL4-DDB-RBX1 complex in response to ultraviolet irradiation. This may weaken the interaction between histones and DNA and facilitate DNA accessibility to repair proteins. Monoubiquitinated at Lys-92 of histone H4 (H4K91ub1) in response to DNA damage. The exact role of H4K91ub1 in DNA damage response is still unclear but it may function as a licensing signal for additional histone H4 post-translational modifications such as H4 Lys-21 methylation (H4K20me). Post-translationally, sumoylated, which is associated with transcriptional repression. In terms of processing, butyrylation of histones marks active promoters and competes with histone acetylation. Glutarylation at Lys-92 (H4K91glu) destabilizes nucleosomes by promoting dissociation of the H2A-H2B dimers from nucleosomes. Post-translationally, ufmylated; monofmylated by UFL1 at Lys-32 (H4K31Ufm1) in response to DNA damage. In terms of processing, lactylated in macrophages by EP300/P300 by using lactoyl-CoA directly derived from endogenous or exogenous lactate, leading to stimulates gene transcription. Delactylated by SIRT3 at Lys-17 (H4K16la).

The protein localises to the nucleus. Its subcellular location is the chromosome. Core component of nucleosome. Nucleosomes wrap and compact DNA into chromatin, limiting DNA accessibility to the cellular machineries which require DNA as a template. Histones thereby play a central role in transcription regulation, DNA repair, DNA replication and chromosomal stability. DNA accessibility is regulated via a complex set of post-translational modifications of histones, also called histone code, and nucleosome remodeling. This is Histone H4 type VIII (H4-VIII) from Gallus gallus (Chicken).